A 304-amino-acid polypeptide reads, in one-letter code: Cell surface-binding protein OPG105 (304 aa).

The region spanning 1–235 (MPQQLSPINI…NDDTQVYYSG (235 aa)) is the Alpha-carbonic anhydrase domain. Residues 1–275 (MPQQLSPINI…YQKYIEGNKT (275 aa)) are Virion surface-facing. A helical membrane pass occupies residues 276 to 294 (FAIIAIVFVFILTAILFLM). Residues 295 to 304 (SQRYSREKQN) are Intravirion-facing.

Belongs to the alpha-carbonic anhydrase family. As to quaternary structure, homodimer; disulfide-linked. Post-translationally, apparently non-glycosylated.

It is found in the virion membrane. Binds to chondroitin sulfate on the cell surface to provide virion attachment to target cell. This chain is Cell surface-binding protein OPG105 (OPG105), found in Monkeypox virus (strain Zaire-96-I-16) (MPX).